A 271-amino-acid polypeptide reads, in one-letter code: Thiosulfate sulfurtransferase (271 aa).

Rhodanese domains follow at residues 21–129 (SAPE…PLSR) and 159–270 (GAAD…TPVE). The Cysteine persulfide intermediate role is filled by C230. Substrate is bound at residue R235.

The protein resides in the cytoplasm. It catalyses the reaction thiosulfate + hydrogen cyanide = thiocyanate + sulfite + 2 H(+). The chain is Thiosulfate sulfurtransferase (rhdA) from Azotobacter vinelandii.